Consider the following 182-residue polypeptide: Peptide deformylase (182 aa).

2 residues coordinate Fe cation: Cys-100 and His-142. Residue Glu-143 is part of the active site. His-146 contacts Fe cation.

The protein belongs to the polypeptide deformylase family. Fe(2+) is required as a cofactor.

It catalyses the reaction N-terminal N-formyl-L-methionyl-[peptide] + H2O = N-terminal L-methionyl-[peptide] + formate. Functionally, removes the formyl group from the N-terminal Met of newly synthesized proteins. Requires at least a dipeptide for an efficient rate of reaction. N-terminal L-methionine is a prerequisite for activity but the enzyme has broad specificity at other positions. The chain is Peptide deformylase from Bartonella bacilliformis (strain ATCC 35685 / KC583 / Herrer 020/F12,63).